The sequence spans 118 residues: Large ribosomal subunit protein uL18 (118 aa).

The protein belongs to the universal ribosomal protein uL18 family. As to quaternary structure, part of the 50S ribosomal subunit; part of the 5S rRNA/L5/L18/L25 subcomplex. Contacts the 5S and 23S rRNAs.

Functionally, this is one of the proteins that bind and probably mediate the attachment of the 5S RNA into the large ribosomal subunit, where it forms part of the central protuberance. This is Large ribosomal subunit protein uL18 from Cupriavidus pinatubonensis (strain JMP 134 / LMG 1197) (Cupriavidus necator (strain JMP 134)).